The chain runs to 338 residues: Methionine import ATP-binding protein MetN 1 (338 aa).

The region spanning 2–241 is the ABC transporter domain; the sequence is IQLENIEKHY…PNEKLTKDFI (240 aa). Residue 38 to 45 coordinates ATP; that stretch reads GYSGAGKS.

Belongs to the ABC transporter superfamily. Methionine importer (TC 3.A.1.24) family. In terms of assembly, the complex is composed of two ATP-binding proteins (MetN), two transmembrane proteins (MetI) and a solute-binding protein (MetQ).

The protein localises to the cell membrane. The enzyme catalyses L-methionine(out) + ATP + H2O = L-methionine(in) + ADP + phosphate + H(+). It catalyses the reaction D-methionine(out) + ATP + H2O = D-methionine(in) + ADP + phosphate + H(+). Part of the ABC transporter complex MetNIQ involved in methionine import. Responsible for energy coupling to the transport system. This chain is Methionine import ATP-binding protein MetN 1, found in Oceanobacillus iheyensis (strain DSM 14371 / CIP 107618 / JCM 11309 / KCTC 3954 / HTE831).